A 252-amino-acid polypeptide reads, in one-letter code: Chitooligosaccharide deacetylase (252 aa).

His-125 lines the Mg(2+) pocket.

This sequence belongs to the YdjC deacetylase family. ChbG subfamily. In terms of assembly, homodimer. The cofactor is Mg(2+).

It localises to the cytoplasm. It catalyses the reaction N,N'-diacetylchitobiose + H2O = N-acetyl-beta-D-glucosaminyl-(1-&gt;4)-D-glucosamine + acetate. It carries out the reaction diacetylchitobiose-6'-phosphate + H2O = N'-monoacetylchitobiose-6'-phosphate + acetate. Its pathway is glycan degradation; chitin degradation. In terms of biological role, involved in the degradation of chitin. ChbG is essential for growth on the acetylated chitooligosaccharides chitobiose and chitotriose but is dispensable for growth on cellobiose and chitosan dimer, the deacetylated form of chitobiose. Deacetylation of chitobiose-6-P and chitotriose-6-P is necessary for both the activation of the chb promoter by the regulatory protein ChbR and the hydrolysis of phosphorylated beta-glucosides by the phospho-beta-glucosidase ChbF. Catalyzes the removal of only one acetyl group from chitobiose-6-P to yield monoacetylchitobiose-6-P, the inducer of ChbR and the substrate of ChbF. In Escherichia coli O157:H7, this protein is Chitooligosaccharide deacetylase.